Reading from the N-terminus, the 62-residue chain is Conotoxin Pn-014 (62 aa).

Residues 1–22 form the signal peptide; that stretch reads MRCLPVFVILLLLIASAPSVDA. Positions 23–48 are excised as a propeptide; that stretch reads RPKTKDDIPLVSFQDHAKRILQTFES. Position 61 is a tryptophan amide (Trp-61).

The protein belongs to the conotoxin T superfamily. Post-translationally, contains 2 disulfide bonds that can be either 'C1-C3, C2-C4' or 'C1-C4, C2-C3', since these disulfide connectivities have been observed for conotoxins with cysteine framework V (for examples, see AC P0DQQ7 and AC P81755). In terms of tissue distribution, expressed by the venom duct.

The protein localises to the secreted. The sequence is that of Conotoxin Pn-014 from Conus pennaceus (Feathered cone).